Here is a 995-residue protein sequence, read N- to C-terminus: tRNA wybutosine-synthesizing protein 2/3/4 (995 aa).

The tRNA wybutosine-synthesizing protein 3 homolog stretch occupies residues 1 to 212 (MDFEKRKAAT…GFSVALASNG (212 aa)). Kelch repeat units follow at residues 284-335 (EVIV…MVGD), 336-386 (FMFV…SVGT), 387-436 (KVYI…AYGS), 437-486 (QSFM…VYKH), and 488-535 (IGII…SILG). Positions 661–995 (ERSEENNLTK…RHLVADVRCR (335 aa)) are tRNA wybutosine-synthesizing protein 2 homolog. Residues Lys-828 and 896–897 (DN) each bind S-adenosyl-L-methionine.

The protein in the C-terminal section; belongs to the class I-like SAM-binding methyltransferase superfamily. TRM5/TYW2 family. This sequence in the N-terminal section; belongs to the TYW3 family.

It carries out the reaction 4-demethyl-7-[(3S)-3-amino-3-carboxypropyl]wyosine(37) in tRNA(Phe) + S-adenosyl-L-methionine = 7-[(3S)-3-amino-3-carboxypropyl]wyosine(37) in tRNA(Phe) + S-adenosyl-L-homocysteine + H(+). It catalyses the reaction 4-demethylwyosine(37) in tRNA(Phe) + S-adenosyl-L-methionine = 4-demethyl-7-[(3S)-3-amino-3-carboxypropyl]wyosine(37) in tRNA(Phe) + S-methyl-5'-thioadenosine + H(+). Its pathway is tRNA modification; wybutosine-tRNA(Phe) biosynthesis. In terms of biological role, S-adenosyl-L-methionine-dependent transferase that acts as a component of the wybutosine biosynthesis pathway. Wybutosine is a hyper modified guanosine with a tricyclic base found at the 3'-position adjacent to the anticodon of eukaryotic phenylalanine tRNA. In Arabidopsis thaliana (Mouse-ear cress), this protein is tRNA wybutosine-synthesizing protein 2/3/4.